The chain runs to 312 residues: Beta-ketoacyl-[acyl-carrier-protein] synthase III (312 aa).

Active-site residues include cysteine 112 and histidine 237. An ACP-binding region spans residues glutamine 238–arginine 242. Asparagine 267 is an active-site residue.

This sequence belongs to the thiolase-like superfamily. FabH family. Homodimer.

The protein resides in the cytoplasm. The catalysed reaction is malonyl-[ACP] + acetyl-CoA + H(+) = 3-oxobutanoyl-[ACP] + CO2 + CoA. The protein operates within lipid metabolism; fatty acid biosynthesis. Catalyzes the condensation reaction of fatty acid synthesis by the addition to an acyl acceptor of two carbons from malonyl-ACP. Catalyzes the first condensation reaction which initiates fatty acid synthesis and may therefore play a role in governing the total rate of fatty acid production. Possesses both acetoacetyl-ACP synthase and acetyl transacylase activities. Its substrate specificity determines the biosynthesis of branched-chain and/or straight-chain of fatty acids. This chain is Beta-ketoacyl-[acyl-carrier-protein] synthase III, found in Bacillus pumilus (strain SAFR-032).